A 183-amino-acid chain; its full sequence is Putative ribosomal N-acetyltransferase YdaF (183 aa).

Residues 10–176 form the N-acetyltransferase domain; it reads ITIRLLEPKD…HDLVYYSLLK (167 aa).

It belongs to the acetyltransferase family. In terms of assembly, homohexamer, and homodimer.

In terms of biological role, putative N-acetyltransferase. May act on ribosomal proteins (Potential). This chain is Putative ribosomal N-acetyltransferase YdaF (ydaF), found in Bacillus subtilis (strain 168).